The following is a 510-amino-acid chain: GMP synthase [glutamine-hydrolyzing] (510 aa).

Positions 3–194 (QILILDFGSQ…ARVICGYKEK (192 aa)) constitute a Glutamine amidotransferase type-1 domain. Cysteine 80 functions as the Nucleophile in the catalytic mechanism. Catalysis depends on residues histidine 168 and glutamate 170. The GMPS ATP-PPase domain occupies 195 to 385 (WTPASIMTAS…LGLGSEIVDI (191 aa)). Residue 222–228 (SGGVDSS) participates in ATP binding.

As to quaternary structure, homodimer.

It carries out the reaction XMP + L-glutamine + ATP + H2O = GMP + L-glutamate + AMP + diphosphate + 2 H(+). It functions in the pathway purine metabolism; GMP biosynthesis; GMP from XMP (L-Gln route): step 1/1. In terms of biological role, catalyzes the synthesis of GMP from XMP. This Elusimicrobium minutum (strain Pei191) protein is GMP synthase [glutamine-hydrolyzing].